A 272-amino-acid polypeptide reads, in one-letter code: Cell wall synthesis protein Wag31 (272 aa).

2 disordered regions span residues 1–22 (MPLT…GKRG) and 62–109 (AARS…SEDT). Residues 30-67 (AFLDLVENELTRLIEENADLRQRVAELDQELAAARSGA) are a coiled coil. 2 stretches are compositionally biased toward low complexity: residues 62–76 (AARS…ATSS) and 94–105 (VYEAPAQPAAPQ). A Phosphothreonine modification is found at Thr74. A coiled-coil region spans residues 139–206 (LSDARAQAEA…AERKHSEIMG (68 aa)). A disordered region spans residues 243 to 272 (ELGQRGSAAPVDSSANSDASGFGQFNRGNN).

Belongs to the DivIVA family. As to quaternary structure, forms homooligomers. Interacts with PbpB and CwsA. Post-translationally, phosphorylated by PknA.

The protein localises to the cytoplasm. In terms of biological role, important for maintaining cell shape and cell wall integrity by localizing peptidoglycan synthesis to the cell poles. Protects PbpB (PBP3, FtsI) from oxidative stress-induced cleavage. In Mycolicibacterium smegmatis (strain ATCC 700084 / mc(2)155) (Mycobacterium smegmatis), this protein is Cell wall synthesis protein Wag31 (wag31).